The sequence spans 166 residues: Transcriptional repressor NrdR (166 aa).

The segment at 3–34 is a zinc-finger region; it reads CPFCGHDDTQVKDSRSTEDGVAIRRRRVCSAC. Residues 49–139 enclose the ATP-cone domain; the sequence is LSVTKADGRR…VYRDFREVEA (91 aa). The tract at residues 146–166 is disordered; it reads DMKPIPGETDTPSPDDSQETP.

This sequence belongs to the NrdR family. The cofactor is Zn(2+).

Functionally, negatively regulates transcription of bacterial ribonucleotide reductase nrd genes and operons by binding to NrdR-boxes. This is Transcriptional repressor NrdR from Gluconobacter oxydans (strain 621H) (Gluconobacter suboxydans).